Reading from the N-terminus, the 273-residue chain is NH(3)-dependent NAD(+) synthetase (273 aa).

47–54 (GISGGQDS) provides a ligand contact to ATP. D53 contributes to the Mg(2+) binding site. R139 serves as a coordination point for deamido-NAD(+). Residue T159 participates in ATP binding. Mg(2+) is bound at residue E164. Residues K172 and D179 each contribute to the deamido-NAD(+) site. ATP-binding residues include K188 and T210. Deamido-NAD(+) is bound at residue 259-260 (HK).

The protein belongs to the NAD synthetase family. As to quaternary structure, homodimer.

It catalyses the reaction deamido-NAD(+) + NH4(+) + ATP = AMP + diphosphate + NAD(+) + H(+). The protein operates within cofactor biosynthesis; NAD(+) biosynthesis; NAD(+) from deamido-NAD(+) (ammonia route): step 1/1. Functionally, catalyzes the ATP-dependent amidation of deamido-NAD to form NAD. Uses ammonia as a nitrogen source. This chain is NH(3)-dependent NAD(+) synthetase, found in Staphylococcus aureus (strain N315).